Consider the following 557-residue polypeptide: Potassium-transporting ATPase potassium-binding subunit (557 aa).

10 helical membrane-spanning segments follow: residues 6–26 (IQLL…GLGL), 59–79 (ALSL…ILFF), 127–147 (AGLT…LLAL), 172–192 (LYVL…FGVV), 247–267 (ISNF…VFLY), 278–298 (WAIF…VWTF), 363–383 (IVFG…LLTV), 410–430 (ILGI…SVSV), 475–495 (VMIA…VLVI), and 520–540 (FYIL…FPVL).

Belongs to the KdpA family. As to quaternary structure, the system is composed of three essential subunits: KdpA, KdpB and KdpC.

The protein localises to the cell inner membrane. Its function is as follows. Part of the high-affinity ATP-driven potassium transport (or Kdp) system, which catalyzes the hydrolysis of ATP coupled with the electrogenic transport of potassium into the cytoplasm. This subunit binds the periplasmic potassium ions and delivers the ions to the membrane domain of KdpB through an intramembrane tunnel. In Leptospira interrogans serogroup Icterohaemorrhagiae serovar copenhageni (strain Fiocruz L1-130), this protein is Potassium-transporting ATPase potassium-binding subunit.